A 487-amino-acid polypeptide reads, in one-letter code: ATP synthase subunit beta (487 aa).

164 to 171 (GGAGVGKT) contacts ATP.

Belongs to the ATPase alpha/beta chains family. As to quaternary structure, F-type ATPases have 2 components, CF(1) - the catalytic core - and CF(0) - the membrane proton channel. CF(1) has five subunits: alpha(3), beta(3), gamma(1), delta(1), epsilon(1). CF(0) has four main subunits: a(1), b(1), b'(1) and c(9-12).

It localises to the cellular thylakoid membrane. It catalyses the reaction ATP + H2O + 4 H(+)(in) = ADP + phosphate + 5 H(+)(out). In terms of biological role, produces ATP from ADP in the presence of a proton gradient across the membrane. The catalytic sites are hosted primarily by the beta subunits. This chain is ATP synthase subunit beta, found in Synechococcus sp. (strain CC9605).